Consider the following 504-residue polypeptide: MQQSTPYLSFRGIGKTFPGVKALTDISFDCYAGQVHALMGENGAGKSTLLKILSGNYAPTTGSVVINGQEMSFSDTTAALNAGVAIIYQELHLVPEMTVAENIYLGQLPHKGGIVNRSLLNYEAGLQLKHLGMDIDPDTPLKYLSIGQWQMVEIAKALARNAKIIAFDEPTSSLSAREIDNLFRVIRELRKEGRVILYVSHRMEEIFALSDAITVFKDGRYVKTFTDMQQVDHDALVQAMVGRDIGDIYGWQPRSYGEERLRLDAVKAPGVRTPISLAVRSGEIVGLFGLVGAGRSELMKGLFGGTQITAGQVYIDQQPIDIRKPSHAIAAGMMLCPEDRKAEGIIPVHSVRDNINISARRKHVLGGCVINNGWEENNADQHIRSLNIKTPGAEQLIMNLSGGNQQKAILGRWLSEEMKVILLDEPTRSIDVGAKHEIYNVIYALAAQGVAVLFASSDLPEVLGVADRIVVMREGEIAGELLHEQADERQALSLAMPKVSQAVA.

ABC transporter domains are found at residues 8–243 (LSFR…MVGR) and 256–499 (YGEE…MPKV). Residue 40–47 (GENGAGKS) coordinates ATP.

Belongs to the ABC transporter superfamily. Arabinose importer (TC 3.A.1.2.2) family. In terms of assembly, the complex is composed of two ATP-binding proteins (AraG), two transmembrane proteins (AraH) and a solute-binding protein (AraF).

It is found in the cell inner membrane. It carries out the reaction L-arabinose(out) + ATP + H2O = L-arabinose(in) + ADP + phosphate + H(+). Part of the ABC transporter complex AraFGH involved in arabinose import. Responsible for energy coupling to the transport system. The chain is Arabinose import ATP-binding protein AraG from Shigella sonnei (strain Ss046).